The following is a 207-amino-acid chain: Guanylate kinase (207 aa).

The Guanylate kinase-like domain maps to G4–R184. Residue A11–S18 coordinates ATP.

It belongs to the guanylate kinase family.

It is found in the cytoplasm. It carries out the reaction GMP + ATP = GDP + ADP. Essential for recycling GMP and indirectly, cGMP. This is Guanylate kinase from Aliivibrio fischeri (strain ATCC 700601 / ES114) (Vibrio fischeri).